The sequence spans 95 residues: Toxin HigB-1 (95 aa).

Toxic component of a type II toxin-antitoxin (TA) system. Inhibits translation by cleavage of mRNA. This chain is Toxin HigB-1 (higB-1), found in Vibrio cholerae serotype O1 (strain ATCC 39315 / El Tor Inaba N16961).